The sequence spans 256 residues: MRTIDLNCDFGESFGVYRLGQEEILSYVTSVNIACGFHAGDPLVMRRTVQLAIQHGVAIGAHPGFPDLFGFGRRAMAVSPEEVYAYVVYQIGALAAFVKAEGGVMTHVKPHGALYNMAAKDAALAEAIAKAVHDVDPMLVLYGLSGSELIRAGRACGLRTASEVFADRTYQADGSLTPRSDPRAIIADEDEAVTQVLMMIRDRRVRSVQGTDVAIEADTVCLHGDNEQAVRFAKRLYQALQNEGIAIQAPRREERR.

Belongs to the LamB/PxpA family. In terms of assembly, forms a complex composed of PxpA, PxpB and PxpC.

It catalyses the reaction 5-oxo-L-proline + ATP + 2 H2O = L-glutamate + ADP + phosphate + H(+). In terms of biological role, catalyzes the cleavage of 5-oxoproline to form L-glutamate coupled to the hydrolysis of ATP to ADP and inorganic phosphate. In Geobacillus kaustophilus (strain HTA426), this protein is 5-oxoprolinase subunit A.